A 102-amino-acid polypeptide reads, in one-letter code: Monothiol glutaredoxin-S6 (102 aa).

Residues 1 to 101 (MESVRSLVED…AMLRRAGAIW (101 aa)) form the Glutaredoxin domain. A [2Fe-2S] cluster-binding site is contributed by Cys21.

Belongs to the glutaredoxin family. CC-type subfamily.

It localises to the cytoplasm. In terms of biological role, may only reduce GSH-thiol disulfides, but not protein disulfides. This chain is Monothiol glutaredoxin-S6 (GRXS6), found in Arabidopsis thaliana (Mouse-ear cress).